Consider the following 855-residue polypeptide: DNA mismatch repair protein MutS (855 aa).

ATP is bound at residue 617–624 (GPNMGGKS).

The protein belongs to the DNA mismatch repair MutS family.

Its function is as follows. This protein is involved in the repair of mismatches in DNA. It is possible that it carries out the mismatch recognition step. This protein has a weak ATPase activity. The protein is DNA mismatch repair protein MutS of Baumannia cicadellinicola subsp. Homalodisca coagulata.